A 2388-amino-acid polypeptide reads, in one-letter code: MSSTLSPTDFDSLEIQGQYSDINNRWDLPDSDWDNDSSSARLFERSRIKALADEREAVQKKTFTKWVNSHLARVTCRVGDLYSDLRDGRNLLRLLEVLSGETLPKPTKGRMRIHCLENVDKALQFLKEQKVHLENMGSHDIVDGNHRLTLGLVWTIILRFQIQDISVETEDNKEKKSAKDALLLWCQMKTAGYPNVNVHNFTTSWRDGLAFNAIVHKHRPDLLDFESLKKCNAHYNLQNAFNLAEKELGLTKLLDPEDVNVDQPDEKSIITYVATYYHYFSKMKALAVEGKRIGKVLDHAMEAEHLVEKYESLASELLQWIEQTIVTLNDRQLANSLSGVQNQLQSFNSYRTVEKPPKFTEKGNLEVLLFTIQSKLRANNQKVYTPREGRLISDINKAWERLEKAEHERELALRTELIRQEKLEQLAARFDRKAAMRETWLSENQRLVSQDNFGLELAAVEAAVRKHEAIETDIVAYSGRVQAVDAVAAELAAEHYHDIKRIAARQNNVARLWDFLREMVAARRERLLLNLELQKVFQDLLYLMDWMAEMKGRLQSQDLGKHLAGVEDLLQLHELVEADIAVQAERVRAVSASALRFCDPGKEYRPCDPQLVSERVATLEQSYEALCELAATRRARLEESRRLWRFLWEVGEAEAWVREQQHLLASAETGRDLTGVLRLLNKHTALRGEMSGRLGPLKLTLEQGQQLVAEGHPGANQASTRAAELQAQWERLEALAEERAQRLAQAASLYQFQADANDMEAWLVDALRLVSSPEVGHDEFSTQALARQHRALEEEIRAHRPTLDALREQAAALPPALSHTPEVQGRVPTLEQHYEELQARAGERARALEAALAFYTMLSEAGACGLWVEEKEQWLNGLALPERLEDLEVVQQRFETLEPEMNALAARVTAVSDIAEQLLKASPPGKDRIIGTQEQLNQRWQQFRSLADGKKAALTSALSIQNYHLECTETQAWMREKTKVIESTQDLGNDLAGVLALQRKLAGTERDLEAISARVGELTQEANALAAGHPAQAPAINTRLGEVQTGWEDLRATMRRREESLGEARRLQDFLRSLDDFQAWLGRTQTAVASEEGPATLPEAEALLAQHAALRGEVERAQSEYSRLRTLGEEVTRDQADPQCLFLRQRLEALGTGWEELGRMWESRQGRLAQAHGFQGFLRDARQAEGVLSSQEYFLSHTEMPGTLQAADAAIKKLEDFMSTMDANGERIRGLLEAGRQLVSKGNIHAEKIQEKADSIEKRHRKNQEAVQQLLGRLRDNREQQHFLQDCQELKLWIDEKMLTAQDVSYDEARNLHTKWQKHQAFMAELAANKDWLDKVDKEGRELTLEKPELKVLVSEKLEDLHRRWDELETTTQAKARSLFDANRAELFAQSCSALESWLESLQAQLHSDDYGKDLTSVNILLKKQQMLEREMAVREKEVEAIQAQAKALAQEDQSAGEVERTSRAVEEKFRALCQPMKDRCRRLQASREQHQFHRDVEDEILWVTERLPMASSLEHGKDLPSVQLLMKKNQTLQKEIQGHEPRIADLKERQRTLGTAAAGPELAELQEMWKRLSHELELRGKRLEEALRAQQFYRDAAEAEAWMGEQELHMMGQEKAKDELSAQAEVKKHQVLEQALADYAQTIKQLAASSQDMIDHEHPESTRLTIRQAQVDKLYAGLKELAGERRERLQEHLRLCQLRRELDDLEQWIQEREVVAASHELGQDYEHVTMLRDKFREFSRDTSTIGQERVDSANALANGLIAGGHAARATVAEWKDSLNEAWADLLELLDTRGQVLAAAYELQRFLHGARQALARVQHKQQQLPDGTGRDLNAAEALQRRHCAYEHDIQALSTQVQQVQDDGLRLQKAYAGDKAEEIGRHMQAVAEAWAQLQGSSAARRQLLLDTTDKFRFFKAVRELMLWMDGINLQMDAQERPRDVSSADLVIKNQQGIKAEIEARADRFSACIDMGQELLARNHYAAEEISEKLSQLQSRRQETAEKWQEKMDWLQLVLEVLVFGRDAGMAEAWLCSQEPLVRSAELGCTVDEVESLIKRHEAFQKSAVAWEERFSALEKLTALEERENEQKRKREEEERRKQPPTSEPMASQPEGSLVDGQRVLDTAWDGTQSKLPPSTQAPSINGVCTDTESSQPLLEQQRLEQSNVPEGPGSGTGDESSGPRGERQTLPRGPAPSPMPQSRSSESAHVATLPARGAELSAQEQMEGTLCRKQEMEAFNKKAANRSWQNVYCVLRRGSLGFYKDARAASAGVPYHGEVPVSLARAQGSVAFDYRKRKHVFKLGLQDGKEYLFQAKDEAEMSSWLRVVNAAIATASSASGEPEEPVVPSASRGLTRAMTMPPVSQPEGSIVLRSKDGREREREKRFSFFKKNK.

Residue serine 2 is modified to N-acetylserine. The actin-binding stretch occupies residues 2–278 (SSTLSPTDFD…IITYVATYYH (277 aa)). 2 positions are modified to phosphoserine: serine 6 and serine 31. Calponin-homology (CH) domains lie at 57–161 (AVQK…LRFQ) and 176–281 (KSAK…HYFS). Spectrin repeat units follow at residues 306-414 (LVEK…LALR), 427-527 (AARF…RERL), 532-639 (ELQK…RLEE), 642-744 (RLWR…QRLA), 749-849 (LYQF…RALE), and 856-954 (TMLS…KAAL). A Phosphoserine modification is found at serine 959. Spectrin repeat units follow at residues 960 to 1063 (IQNY…SLGE), 1066 to 1169 (RLQD…GRLA), 1174 to 1266 (FQGF…NQEA), 1279 to 1379 (EQQH…ARSL), 1384 to 1485 (RAEL…RRLQ), 1489 to 1586 (EQHQ…RLEE), 1589 to 1692 (RAQQ…RLQE), 1696 to 1797 (LCQL…GQVL), 1801 to 1904 (YELQ…QLLL), 1910 to 2010 (FRFF…DWLQ), and 2017 to 2078 (VFGR…LTAL). Phosphoserine is present on serine 1073. A Phosphoserine modification is found at serine 1574. The segment covering 2080–2096 (ERENEQKRKREEEERRK) has biased composition (basic and acidic residues). 2 disordered regions span residues 2080-2112 (EREN…EGSL) and 2124-2207 (DGTQ…HVAT). Residues 2124–2163 (DGTQSKLPPSTQAPSINGVCTDTESSQPLLEQQRLEQSNV) show a composition bias toward polar residues. Phosphoserine occurs at positions 2169 and 2199. Residues 2218-2328 (QEQMEGTLCR…WLRVVNAAIA (111 aa)) enclose the PH domain. Residues 2333–2388 (ASGEPEEPVVPSASRGLTRAMTMPPVSQPEGSIVLRSKDGREREREKRFSFFKKNK) are disordered. Threonine 2354 carries the phosphothreonine modification. Serine 2359 carries the post-translational modification Phosphoserine. Basic and acidic residues predominate over residues 2368 to 2381 (RSKDGREREREKRF).

This sequence belongs to the spectrin family. Abundantly transcribed in the brain. Neurons are the predominant cell-type to express the gene. Found abundantly in Purkinje cells.

The protein resides in the cytoplasm. It localises to the cytoskeleton. It is found in the cell cortex. In terms of biological role, probably plays an important role in neuronal membrane skeleton. In Rattus norvegicus (Rat), this protein is Spectrin beta chain, non-erythrocytic 2 (Sptbn2).